Consider the following 43-residue polypeptide: METATLVAIPISCLLVSFTGYALYTAFGQPSRELRDPFEEHED.

A helical membrane pass occupies residues 5–27 (TLVAIPISCLLVSFTGYALYTAF).

It belongs to the PsbN family.

It is found in the plastid. Its subcellular location is the chloroplast thylakoid membrane. Functionally, may play a role in photosystem I and II biogenesis. The polypeptide is Protein PsbN (Sphagnum cuspidatum (Bog moss)).